We begin with the raw amino-acid sequence, 367 residues long: Voltage-gated potassium channel subunit beta-2 (367 aa).

3 positions are modified to phosphoserine: serine 9, serine 14, and serine 20. An Asymmetric dimethylarginine; alternate modification is found at arginine 28. Arginine 28 is modified (omega-N-methylarginine; alternate). The residue at position 31 (serine 31) is a Phosphoserine. Residues threonine 56, tryptophan 57, glutamine 63, and aspartate 85 each contribute to the NADP(+) site. The Proton donor/acceptor role is filled by tyrosine 90. Serine 112 is subject to Phosphoserine. An N6-acetyllysine modification is found at lysine 124. Residues asparagine 158, serine 188, arginine 189, glutamine 214, tryptophan 243, serine 244, proline 245, leucine 246, alanine 247, cysteine 248, lysine 254, tyrosine 262, arginine 264, glycine 323, serine 325, glutamine 329, glutamate 332, and asparagine 333 each contribute to the NADP(+) site.

It belongs to the shaker potassium channel beta subunit family. In terms of assembly, homotetramer. Interaction with tetrameric potassium channel alpha subunits gives rise to a heterooctamer. Identified in potassium channel complexes containing KCNA1, KCNA2, KCNA4, KCNA5, KCNA6, KCNAB1, KCNAB2 and KCND3. Interacts (in unphosphorylated form) with MAPRE1. Forms a ternary complex with SQSTM1 and PRKCZ. Phosphorylated by PRKCZ; may be regulated by incorporation in a complex composed of PRKCZ and SQSTM1. As to expression, detected in the juxtaparanodal region of nodes of Ranvier in myelinated nerve fibers in the spinal cord (at protein level).

The protein localises to the cytoplasm. Its subcellular location is the membrane. The protein resides in the cell membrane. It is found in the cell projection. It localises to the axon. The protein localises to the synapse. Its subcellular location is the synaptosome. The protein resides in the cytoskeleton. It carries out the reaction hydroxyacetone + NADP(+) = methylglyoxal + NADPH + H(+). The enzyme catalyses (E)-4-oxonon-2-en-1-ol + NADP(+) = (E)-4-oxonon-2-enal + NADPH + H(+). Functionally, regulatory subunit of the voltage-gated potassium (Kv) Shaker channels composed of pore-forming and potassium-conducting alpha subunits and of regulatory beta subunits. The beta-2/KCNAB2 cytoplasmic subunit promotes potassium channel closure via a mechanism that does not involve physical obstruction of the channel pore. Promotes the inactivation of Kv1.4/KCNA4 and Kv1.5/KCNA5 alpha subunit-containing channels. Displays nicotinamide adenine dinucleotide phosphate (NADPH)-dependent aldoketoreductase activity by catalyzing the NADPH-dependent reduction of a wide range of aldehyde and ketone substrates. Substrate specificity includes methylglyoxal, 9,10-phenanthrenequinone, prostaglandin J2, 4-nitrobenzaldehyde, 4-nitroacetophenone and 4-oxo-trans-2-nonenal (in vitro, no physiological substrate identified yet). The binding of oxidized and reduced nucleotide alters Kv channel gating and may contribute to dynamic fine tuning of cell excitability. Contributes to the regulation of nerve signaling, and prevents neuronal hyperexcitability. The polypeptide is Voltage-gated potassium channel subunit beta-2 (KCNAB2) (Bos taurus (Bovine)).